Reading from the N-terminus, the 252-residue chain is MPVHATPAAESQIISMPEWRRTANFKPSVWGDRFANYAEDIITQTQMQEQVEELKQVRKEVFTNAADDSSHQLKPIDEIQRLGVAYHFESEIDQALERIHETYQDIHDGGDLYNVALRFRLLRRHGYNVSCDVFNKFKDTNGDYKKSLVTDLSGMLSFYEAAHLRVHGEKLLEEALVFTTTHLQSASAKSSLLKTQITEAVERLLKTMERLGARRYMSIYQDEASYSENLLKLAKLDFNWQCLHKKELSDIP.

The protein belongs to the terpene synthase family. Tpsa subfamily.

The chain is Putative pinene synthase from Fragaria ananassa (Strawberry).